The sequence spans 524 residues: PiggyBac transposable element-derived protein 5 (524 aa).

The tract at residues 30-117 is disordered; sequence DDVFGESGPD…DTGGPTRKMP (88 aa). Over residues 47–59 the composition is skewed to low complexity; the sequence is STSAASRSSSAAS. Pro residues predominate over residues 67–79; that stretch reads PGPPGAAPPPPRA. Residues 98 to 108 show a composition bias toward basic and acidic residues; the sequence is LRDRPPPRFED. At S521 the chain carries Phosphoserine.

It is found in the nucleus. Its function is as follows. Transposase that mediates sequence-specific genomic rearrangements. Can induce genomic rearrangements that inactivate the HPRT1 gene. The sequence is that of PiggyBac transposable element-derived protein 5 (PGBD5) from Homo sapiens (Human).